Here is a 947-residue protein sequence, read N- to C-terminus: Bromodomain testis-specific protein (947 aa).

One can recognise a Bromo 1 domain in the interval 27 to 133 (RLTNQLQYLQ…KLFMQKLSQM (107 aa)). Asparagine 109 contacts JQ1. Phosphoserine is present on serine 187. Residues 202 to 228 (QTAAQVTKGVKRKADTTTPATSAVKAS) form a disordered region. Positions 209–220 (KGVKRKADTTTP) match the Nuclear localization signal motif. A compositionally biased stretch (polar residues) spans 217–228 (TTTPATSAVKAS). Residues 267-376 (VKVTEQLRHC…DVFETHFSKI (110 aa)) enclose the Bromo 2 domain. Disordered regions lie at residues 395 to 420 (ETTG…DERV), 444 to 511 (PFRK…KPMN), 610 to 698 (NNQL…IPPE), and 882 to 924 (NKCS…RRRE). The stretch at 417 to 470 (DERVKRLAKLQEQLKAVHQQLQVLSQVPFRKLNKKKEKSKKEKKKEKVNNSNEN) forms a coiled coil. A compositionally biased stretch (basic residues) spans 447-462 (KLNKKKEKSKKEKKKE). The segment covering 470-481 (NPRKMCEQMRLK) has biased composition (basic and acidic residues). The span at 482–494 (EKSKRNQPKKRKQ) shows a compositional bias: basic residues. An NET domain is found at 500–582 (KSEDEDNAKP…ACLRKRPLKP (83 aa)). The stretch at 591–621 (KEELHSQKKQELEKRLLDVNNQLNSRKRQTK) forms a coiled coil. A compositionally biased stretch (low complexity) spans 637–662 (LSESSSSSSSSSESESSSSDLSSSDS). 2 stretches are compositionally biased toward basic and acidic residues: residues 674–692 (TEVK…KMKN) and 885–924 (SGEE…RRRE).

It belongs to the BET family. As to quaternary structure, interacts with mRNA splicing machinery proteins SRSF2, DDX5, HNRNPK and TARDBP. Interacts with the acetylated N-terminus of histone H1, H2, H3 and H4. Interacts with P-TEFb components CDK9 and CCNT1/cyclin-T1. Interacts with SMARCE1. Interacts with the acetylated N-terminus of histone H1.4, H2A, H2B, H3 and H4. In terms of processing, ubiquitinated in a SPOP-dependent manner, leading to proteasomal degradation. In terms of tissue distribution, testis-specific. A 3-fold higher expression is seen in adult testis than in embryo testis. Expression seems to be correlated with histone H4 hyperacetylation during the haploid phase of spermatogenesis (spermiogenesis). No expression, or very low expression is seen in patients' testes with abnormal spermatogenesis. Expressed in cancers such as non-small cell lung cancer and squamous cell carcinomas of the head and neck as well as of esophagus, but not in melanoma or in cancers of the colon, breast, kidney and bladder.

The protein localises to the nucleus. In terms of biological role, testis-specific chromatin protein that specifically binds histone H4 acetylated at 'Lys-5' and 'Lys-8' (H4K5ac and H4K8ac, respectively) and plays a key role in spermatogenesis. Required in late pachytene spermatocytes: plays a role in meiotic and post-meiotic cells by binding to acetylated histones at the promoter of specific meiotic and post-meiotic genes, facilitating their activation at the appropriate time. In the post-meiotic phase of spermatogenesis, binds to hyperacetylated histones and participates in their general removal from DNA. Also recognizes and binds a subset of butyrylated histones: able to bind histone H4 butyrylated at 'Lys-8' (H4K8ac), while it is not able to bind H4 butyrylated at 'Lys-5' (H4K5ac). Also acts as a component of the splicing machinery in pachytene spermatocytes and round spermatids and participates in 3'-UTR truncation of specific mRNAs in post-meiotic spermatids. Required for chromocenter organization, a structure comprised of peri-centromeric heterochromatin. In Homo sapiens (Human), this protein is Bromodomain testis-specific protein (BRDT).